The following is a 699-amino-acid chain: Bifunctional protein GAL10 (699 aa).

Residues 1–357 (MTAQLQSEST…TTENPFGYQL (357 aa)) form a galactowaldenase region. 13 to 44 (IVLVTGGAGYIGSHTVVELIENGYDCVVADNL) contacts NAD(+). A mutarotase region spans residues 358–699 (RGVEARFSAE…YGSKIVYRFS (342 aa)). Histidine 537 functions as the For mutarotase activity in the catalytic mechanism. Serine 562 is subject to Phosphoserine.

In the N-terminal section; belongs to the NAD(P)-dependent epimerase/dehydratase family. The protein in the C-terminal section; belongs to the aldose epimerase family. Requires NAD(+) as cofactor.

The catalysed reaction is UDP-alpha-D-glucose = UDP-alpha-D-galactose. The enzyme catalyses alpha-D-glucose = beta-D-glucose. It functions in the pathway carbohydrate metabolism; galactose metabolism. The protein operates within carbohydrate metabolism; hexose metabolism. Its function is as follows. Mutarotase converts alpha-aldose to the beta-anomer. It is active on D-glucose, L-arabinose, D-xylose, D-galactose, maltose and lactose. In Saccharomyces cerevisiae (strain ATCC 204508 / S288c) (Baker's yeast), this protein is Bifunctional protein GAL10 (GAL10).